Here is a 503-residue protein sequence, read N- to C-terminus: Probable cytosol aminopeptidase (503 aa).

Mn(2+) is bound by residues Lys-270 and Asp-275. Lys-282 is a catalytic residue. Asp-293, Asp-352, and Glu-354 together coordinate Mn(2+). Arg-356 is a catalytic residue.

This sequence belongs to the peptidase M17 family. Mn(2+) is required as a cofactor.

Its subcellular location is the cytoplasm. The catalysed reaction is Release of an N-terminal amino acid, Xaa-|-Yaa-, in which Xaa is preferably Leu, but may be other amino acids including Pro although not Arg or Lys, and Yaa may be Pro. Amino acid amides and methyl esters are also readily hydrolyzed, but rates on arylamides are exceedingly low.. It carries out the reaction Release of an N-terminal amino acid, preferentially leucine, but not glutamic or aspartic acids.. Presumably involved in the processing and regular turnover of intracellular proteins. Catalyzes the removal of unsubstituted N-terminal amino acids from various peptides. The polypeptide is Probable cytosol aminopeptidase (Klebsiella pneumoniae (strain 342)).